Reading from the N-terminus, the 505-residue chain is Histidine ammonia-lyase (505 aa).

Positions 141–143 (ASG) form a cross-link, 5-imidazolinone (Ala-Gly). 2,3-didehydroalanine (Ser) is present on S142.

Belongs to the PAL/histidase family. In terms of processing, contains an active site 4-methylidene-imidazol-5-one (MIO), which is formed autocatalytically by cyclization and dehydration of residues Ala-Ser-Gly.

The protein resides in the cytoplasm. It carries out the reaction L-histidine = trans-urocanate + NH4(+). Its pathway is amino-acid degradation; L-histidine degradation into L-glutamate; N-formimidoyl-L-glutamate from L-histidine: step 1/3. The sequence is that of Histidine ammonia-lyase from Bacillus cereus (strain ATCC 10987 / NRS 248).